A 572-amino-acid chain; its full sequence is AAA ATPase forming ring-shaped complexes (572 aa).

Over residues 1–18 (MTTASQQTSSHSTASSTS) the composition is skewed to low complexity. Residues 1 to 30 (MTTASQQTSSHSTASSTSRKGNNNDATPSL) are disordered. Residues 42 to 70 (TRNAKLVEMLKASRDKLDALNEQIRALSD) adopt a coiled-coil conformation. 258–263 (GCGKTL) provides a ligand contact to ATP. Residues 543–572 (VAHHNRKTTTETEATEPEGTDSGKGHTDAS) are disordered. The span at 563–572 (DSGKGHTDAS) shows a compositional bias: basic and acidic residues.

The protein belongs to the AAA ATPase family. As to quaternary structure, homohexamer. Assembles into a hexameric ring structure.

This is AAA ATPase forming ring-shaped complexes from Corynebacterium kroppenstedtii (strain DSM 44385 / JCM 11950 / CIP 105744 / CCUG 35717).